A 236-amino-acid chain; its full sequence is Probable glutathione S-transferase GSTU6 (236 aa).

The region spanning 5 to 84 (GELKLLGVWS…YIDEVWPGGA (80 aa)) is the GST N-terminal domain. Glutathione-binding positions include Ser-15, Lys-42, Val-56, and 68-69 (ES). Residues 94 to 228 (DPYERAVARF…KLLEFRQTLL (135 aa)) form the GST C-terminal domain.

Belongs to the GST superfamily. Tau family. As to expression, expressed in seedling shoots and roots.

The catalysed reaction is RX + glutathione = an S-substituted glutathione + a halide anion + H(+). In terms of biological role, conjugation of reduced glutathione to a wide number of exogenous and endogenous hydrophobic electrophiles. The protein is Probable glutathione S-transferase GSTU6 (GSTU6) of Oryza sativa subsp. japonica (Rice).